The sequence spans 85 residues: UPF0291 protein str0508 (85 aa).

The tract at residues T62 to S85 is disordered.

Belongs to the UPF0291 family.

Its subcellular location is the cytoplasm. This chain is UPF0291 protein str0508, found in Streptococcus thermophilus (strain CNRZ 1066).